Consider the following 413-residue polypeptide: Patatin-like protein 3 (413 aa).

Residues 54-245 form the PNPLA domain; it reads LSVDGGARPE…ALGNPTAAAI (192 aa). The GGXR signature appears at 58–61; that stretch reads GGAR. The active-site Nucleophile is S100. The disordered stretch occupies residues 384–413; that stretch reads EHGRRKQHVPPAASGGGGGGLDCHVSKKQP.

This sequence belongs to the patatin family.

Possesses non-specific lipolytic acyl hydrolase (LAH) activity. Hydrolyzes phospholipids as well as galactolipids. May play a role in disease resistance. The protein is Patatin-like protein 3 (PLP3) of Oryza sativa subsp. indica (Rice).